The sequence spans 355 residues: Heavy metal-associated isoprenylated plant protein 7 (355 aa).

The segment covering 1–58 (MGEEEKKPEAAEEKKMEEKKPEEKKEGEDKKVDAEKKGEDSDKKPQEGESNKDSKEDS) has biased composition (basic and acidic residues). Positions 1 to 74 (MGEEEKKPEA…APAPPPPPQE (74 aa)) are disordered. Pro residues predominate over residues 63-73 (PEAPAPPPPPQ). HMA domains follow at residues 72–136 (PQEV…HRQV) and 170–234 (VVTV…KHAA). A metal cation is bound by residues C83 and C86. The segment at 132-157 (THRQVQLLSPIPPPPPPPEKKAEEDK) is disordered. A metal cation-binding residues include C181 and C184. The interval 235–308 (IMKIDPPPPP…GGGEEEGKVV (74 aa)) is disordered. A compositionally biased stretch (basic and acidic residues) spans 254–293 (EGEKKEEEKGEGESKGEEGKDDKAKTDEEKKEGDGGKGEG). Position 352 is a cysteine methyl ester (C352). C352 is lipidated: S-farnesyl cysteine. Positions 353-355 (TVM) are cleaved as a propeptide — removed in mature form.

Belongs to the HIPP family. Post-translationally, efficiently farnesylated in vitro.

Functionally, heavy-metal-binding protein. Binds zinc, copper and nickel in a reversible manner. The protein is Heavy metal-associated isoprenylated plant protein 7 of Arabidopsis thaliana (Mouse-ear cress).